Here is a 372-residue protein sequence, read N- to C-terminus: Probable dual-specificity RNA methyltransferase RlmN (372 aa).

A disordered region spans residues 1–20 (MTSLPLTPVNPDAPARRAAM). E112 (proton acceptor) is an active-site residue. One can recognise a Radical SAM core domain in the interval 118–357 (YPDRVTVCLS…STTVRDTRGR (240 aa)). Cysteines 125 and 363 form a disulfide. [4Fe-4S] cluster is bound by residues C132, C136, and C139. S-adenosyl-L-methionine contacts are provided by residues 187-188 (GE), S221, 244-246 (SLH), and N320. C363 (S-methylcysteine intermediate) is an active-site residue.

This sequence belongs to the radical SAM superfamily. RlmN family. [4Fe-4S] cluster is required as a cofactor.

It is found in the cytoplasm. It catalyses the reaction adenosine(2503) in 23S rRNA + 2 reduced [2Fe-2S]-[ferredoxin] + 2 S-adenosyl-L-methionine = 2-methyladenosine(2503) in 23S rRNA + 5'-deoxyadenosine + L-methionine + 2 oxidized [2Fe-2S]-[ferredoxin] + S-adenosyl-L-homocysteine. The catalysed reaction is adenosine(37) in tRNA + 2 reduced [2Fe-2S]-[ferredoxin] + 2 S-adenosyl-L-methionine = 2-methyladenosine(37) in tRNA + 5'-deoxyadenosine + L-methionine + 2 oxidized [2Fe-2S]-[ferredoxin] + S-adenosyl-L-homocysteine. Specifically methylates position 2 of adenine 2503 in 23S rRNA and position 2 of adenine 37 in tRNAs. The protein is Probable dual-specificity RNA methyltransferase RlmN of Salinispora tropica (strain ATCC BAA-916 / DSM 44818 / JCM 13857 / NBRC 105044 / CNB-440).